We begin with the raw amino-acid sequence, 485 residues long: Glutamate--tRNA ligase (485 aa).

The 'HIGH' region motif lies at 11–21 (PSPTGHLHIGN). A 'KMSKS' region motif is present at residues 252–256 (KLSKR). Residue K255 coordinates ATP.

The protein belongs to the class-I aminoacyl-tRNA synthetase family. Glutamate--tRNA ligase type 1 subfamily. As to quaternary structure, monomer.

The protein localises to the cytoplasm. The catalysed reaction is tRNA(Glu) + L-glutamate + ATP = L-glutamyl-tRNA(Glu) + AMP + diphosphate. Catalyzes the attachment of glutamate to tRNA(Glu) in a two-step reaction: glutamate is first activated by ATP to form Glu-AMP and then transferred to the acceptor end of tRNA(Glu). In Bacillus mycoides (strain KBAB4) (Bacillus weihenstephanensis), this protein is Glutamate--tRNA ligase.